The chain runs to 274 residues: Penicillin-insensitive murein endopeptidase (274 aa).

The first 19 residues, 1–19, serve as a signal peptide directing secretion; that stretch reads MNKTAIALLALLASSASLA. 3 disulfides stabilise this stretch: C44-C265, C187-C235, and C216-C223. The Zn(2+) site is built by H110, H113, D120, D147, H150, and H211. Residues 227 to 274 are disordered; it reads PLPPPGDGCGAELQSWFEPPKPGTTKPEKKTPPPLPPSCQALLDEHVI.

This sequence belongs to the peptidase M74 family. In terms of assembly, dimer. Zn(2+) is required as a cofactor.

It localises to the periplasm. Murein endopeptidase that cleaves the D-alanyl-meso-2,6-diamino-pimelyl amide bond that connects peptidoglycan strands. Likely plays a role in the removal of murein from the sacculus. This is Penicillin-insensitive murein endopeptidase from Escherichia coli O6:K15:H31 (strain 536 / UPEC).